The following is a 508-amino-acid chain: Hydroxymethylglutaryl-CoA synthase, mitochondrial (508 aa).

Residues 1 to 37 (MQRLLAPARRVLQVKRVMQESSLSPAHLLPAAQQRFS) constitute a mitochondrion transit peptide. The residue at position 52 (Lys-52) is an N6-succinyllysine. (3S)-3-hydroxy-3-methylglutaryl-CoA-binding residues include Glu-80 and Ala-81. N6-acetyllysine; alternate occurs at positions 83 and 118. Lys-83 and Lys-118 each carry N6-succinyllysine; alternate. Glu-132 acts as the Proton donor/acceptor in catalysis. (3S)-3-hydroxy-3-methylglutaryl-CoA is bound by residues Cys-166, Asn-204, and Thr-208. The active-site Acyl-thioester intermediate is the Cys-166. Position 221 is an N6-succinyllysine (Lys-221). Lys-243 bears the N6-acetyllysine mark. Lys-256 is modified (N6-acetyllysine; alternate). The residue at position 256 (Lys-256) is an N6-succinyllysine; alternate. Residues Ser-258 and His-301 each coordinate (3S)-3-hydroxy-3-methylglutaryl-CoA. The active-site Proton donor/acceptor is the His-301. Lys-306 bears the N6-acetyllysine mark. A (3S)-3-hydroxy-3-methylglutaryl-CoA-binding site is contributed by Lys-310. Lys-310 and Lys-327 each carry N6-acetyllysine; alternate. Lys-310 and Lys-327 each carry N6-succinyllysine; alternate. At Lys-333 the chain carries N6-succinyllysine. 4 positions are modified to N6-acetyllysine; alternate: Lys-342, Lys-350, Lys-354, and Lys-358. N6-succinyllysine; alternate occurs at positions 342, 350, 354, and 358. Asn-380 and Ser-414 together coordinate (3S)-3-hydroxy-3-methylglutaryl-CoA. Position 427 is an N6-acetyllysine (Lys-427). Ser-433 bears the Phosphoserine mark. Lys-437 is modified (N6-acetyllysine). A Phosphoserine modification is found at Ser-440. Lys-447 is subject to N6-acetyllysine; alternate. Residue Lys-447 is modified to N6-succinyllysine; alternate. Position 456 is a phosphoserine (Ser-456). Lys-473 carries the N6-acetyllysine; alternate modification. The residue at position 473 (Lys-473) is an N6-succinyllysine; alternate. Ser-477 is subject to Phosphoserine.

This sequence belongs to the thiolase-like superfamily. HMG-CoA synthase family. Homodimer. In terms of processing, succinylated. Desuccinylated by SIRT5. Succinylation, at least at Lys-83 and Lys-310, inhibits the enzymatic activity. In terms of tissue distribution, liver and kidney.

Its subcellular location is the mitochondrion. It catalyses the reaction acetoacetyl-CoA + acetyl-CoA + H2O = (3S)-3-hydroxy-3-methylglutaryl-CoA + CoA + H(+). It participates in metabolic intermediate biosynthesis; (R)-mevalonate biosynthesis; (R)-mevalonate from acetyl-CoA: step 2/3. In terms of biological role, catalyzes the first irreversible step in ketogenesis, condensing acetyl-CoA to acetoacetyl-CoA to form HMG-CoA, which is converted by HMG-CoA reductase (HMGCR) into mevalonate. The chain is Hydroxymethylglutaryl-CoA synthase, mitochondrial (Hmgcs2) from Rattus norvegicus (Rat).